The chain runs to 513 residues: Histidine ammonia-lyase (513 aa).

Residues 144 to 146 (ASG) constitute a cross-link (5-imidazolinone (Ala-Gly)). Ser145 is subject to 2,3-didehydroalanine (Ser).

Belongs to the PAL/histidase family. In terms of processing, contains an active site 4-methylidene-imidazol-5-one (MIO), which is formed autocatalytically by cyclization and dehydration of residues Ala-Ser-Gly.

It localises to the cytoplasm. The catalysed reaction is L-histidine = trans-urocanate + NH4(+). The protein operates within amino-acid degradation; L-histidine degradation into L-glutamate; N-formimidoyl-L-glutamate from L-histidine: step 1/3. This is Histidine ammonia-lyase from Streptococcus pyogenes serotype M5 (strain Manfredo).